The following is a 486-amino-acid chain: Protein nucleotidyltransferase YdiU (486 aa).

The ATP site is built by G90, G92, R93, K113, D125, G126, R176, and R183. The active-site Proton acceptor is D252. Mg(2+) contacts are provided by N253 and D262. D262 contributes to the ATP binding site.

The protein belongs to the SELO family. It depends on Mg(2+) as a cofactor. Mn(2+) is required as a cofactor.

The catalysed reaction is L-seryl-[protein] + ATP = 3-O-(5'-adenylyl)-L-seryl-[protein] + diphosphate. The enzyme catalyses L-threonyl-[protein] + ATP = 3-O-(5'-adenylyl)-L-threonyl-[protein] + diphosphate. It catalyses the reaction L-tyrosyl-[protein] + ATP = O-(5'-adenylyl)-L-tyrosyl-[protein] + diphosphate. It carries out the reaction L-histidyl-[protein] + UTP = N(tele)-(5'-uridylyl)-L-histidyl-[protein] + diphosphate. The catalysed reaction is L-seryl-[protein] + UTP = O-(5'-uridylyl)-L-seryl-[protein] + diphosphate. The enzyme catalyses L-tyrosyl-[protein] + UTP = O-(5'-uridylyl)-L-tyrosyl-[protein] + diphosphate. Nucleotidyltransferase involved in the post-translational modification of proteins. It can catalyze the addition of adenosine monophosphate (AMP) or uridine monophosphate (UMP) to a protein, resulting in modifications known as AMPylation and UMPylation. The chain is Protein nucleotidyltransferase YdiU from Pseudomonas aeruginosa (strain LESB58).